The chain runs to 150 residues: MKVIFLVDVKGKGKKGEIKEVPTGYAQNFLIKKNLAREASSQAIGQLRGQQKAEEKAQAEILAEAKAVKKILDDEKTRVQFKEKVGPDGRTFGSITAKKISEELQKQFKVKVDKRHIVLDHPIRAIGLIEVPVKLHKEVIAEIKLNIAEA.

It belongs to the bacterial ribosomal protein bL9 family.

Binds to the 23S rRNA. The protein is Large ribosomal subunit protein bL9 of Streptococcus equi subsp. zooepidemicus (strain MGCS10565).